Here is a 400-residue protein sequence, read N- to C-terminus: Tryptophan synthase beta chain (400 aa).

Lysine 92 bears the N6-(pyridoxal phosphate)lysine mark.

The protein belongs to the TrpB family. Tetramer of two alpha and two beta chains. Pyridoxal 5'-phosphate serves as cofactor.

The catalysed reaction is (1S,2R)-1-C-(indol-3-yl)glycerol 3-phosphate + L-serine = D-glyceraldehyde 3-phosphate + L-tryptophan + H2O. The protein operates within amino-acid biosynthesis; L-tryptophan biosynthesis; L-tryptophan from chorismate: step 5/5. The beta subunit is responsible for the synthesis of L-tryptophan from indole and L-serine. The chain is Tryptophan synthase beta chain from Leptospira borgpetersenii serovar Hardjo-bovis (strain JB197).